We begin with the raw amino-acid sequence, 630 residues long: Mannosyl-oligosaccharide 1,2-alpha-mannosidase IC (630 aa).

Residues 1–22 lie on the Cytoplasmic side of the membrane; the sequence is MLMRKVPGFVPASPWGLRLPQK. The helical; Signal-anchor for type II membrane protein transmembrane segment at 23-43 threads the bilayer; sequence FLFLLFLSGLVTLCFGALFLL. At 44 to 630 the chain is on the lumenal side; the sequence is PHSSRLKRLF…DSSGRAWGRH (587 aa). A disordered region spans residues 74 to 140; the sequence is PAREQEPPPN…ASRPGDEGVP (67 aa). Positions 80-89 are enriched in pro residues; the sequence is PPPNPAPAAP. Residues 102–113 show a composition bias toward basic residues; it reads PRRRKGGLRRTR. S164 is modified (phosphoserine). N250 is a glycosylation site (N-linked (GlcNAc...) asparagine). An intrachain disulfide couples C453 to C485. E499 serves as the catalytic Proton donor. T610 is a binding site for Ca(2+). The N-linked (GlcNAc...) asparagine glycan is linked to N618.

Belongs to the glycosyl hydrolase 47 family. It depends on Ca(2+) as a cofactor. Expressed in most tissues with the exception of lung, muscle and pancreas. Highly expressed in placenta.

It is found in the golgi apparatus membrane. The catalysed reaction is N(4)-(alpha-D-Man-(1-&gt;2)-alpha-D-Man-(1-&gt;2)-alpha-D-Man-(1-&gt;3)-[alpha-D-Man-(1-&gt;2)-alpha-D-Man-(1-&gt;3)-[alpha-D-Man-(1-&gt;2)-alpha-D-Man-(1-&gt;6)]-alpha-D-Man-(1-&gt;6)]-beta-D-Man-(1-&gt;4)-beta-D-GlcNAc-(1-&gt;4)-beta-D-GlcNAc)-L-asparaginyl-[protein] (N-glucan mannose isomer 9A1,2,3B1,2,3) + 4 H2O = N(4)-(alpha-D-Man-(1-&gt;3)-[alpha-D-Man-(1-&gt;3)-[alpha-D-Man-(1-&gt;6)]-alpha-D-Man-(1-&gt;6)]-beta-D-Man-(1-&gt;4)-beta-D-GlcNAc-(1-&gt;4)-beta-D-GlcNAc)-L-asparaginyl-[protein] (N-glucan mannose isomer 5A1,2) + 4 beta-D-mannose. It catalyses the reaction N(4)-(alpha-D-Man-(1-&gt;2)-alpha-D-Man-(1-&gt;2)-alpha-D-Man-(1-&gt;3)-[alpha-D-Man-(1-&gt;3)-[alpha-D-Man-(1-&gt;2)-alpha-D-Man-(1-&gt;6)]-alpha-D-Man-(1-&gt;6)]-beta-D-Man-(1-&gt;4)-beta-D-GlcNAc-(1-&gt;4)-beta-D-GlcNAc)-L-asparaginyl-[protein] (N-glucan mannose isomer 8A1,2,3B1,3) + 3 H2O = N(4)-(alpha-D-Man-(1-&gt;3)-[alpha-D-Man-(1-&gt;3)-[alpha-D-Man-(1-&gt;6)]-alpha-D-Man-(1-&gt;6)]-beta-D-Man-(1-&gt;4)-beta-D-GlcNAc-(1-&gt;4)-beta-D-GlcNAc)-L-asparaginyl-[protein] (N-glucan mannose isomer 5A1,2) + 3 beta-D-mannose. It functions in the pathway protein modification; protein glycosylation. With respect to regulation, inhibited by both 1-deoxymannojirimycin and kifunensine. Involved in the maturation of Asn-linked oligosaccharides. Trim alpha-1,2-linked mannose residues from Man(9)GlcNAc(2) to produce first Man(8)GlcNAc(2) then Man(6)GlcNAc and a small amount of Man(5)GlcNAc. This chain is Mannosyl-oligosaccharide 1,2-alpha-mannosidase IC (MAN1C1), found in Homo sapiens (Human).